A 908-amino-acid chain; its full sequence is NADH-quinone oxidoreductase subunit G (908 aa).

The 2Fe-2S ferredoxin-type domain maps to 2-83 (ATIHVDGKEY…GTFISIDDEE (82 aa)). Residues Cys34, Cys45, Cys48, and Cys67 each coordinate [2Fe-2S] cluster. Residues 83 to 122 (EAKQFRESVVEWLMTNHPHDCPVCEEGGNCHLQDMTVMTG) form the 4Fe-4S His(Cys)3-ligated-type domain. Residues His99, Cys103, Cys106, Cys112, Cys151, Cys154, Cys157, Cys201, Cys228, Cys231, Cys235, and Cys263 each contribute to the [4Fe-4S] cluster site. The 4Fe-4S Mo/W bis-MGD-type domain maps to 221–277 (MQFAPSICQQCSIGCNISPGERYGELRRIENRYNGTVNHYFLCDRGRFGYGYVNLKD).

It belongs to the complex I 75 kDa subunit family. As to quaternary structure, composed of 13 different subunits. Subunits NuoCD, E, F, and G constitute the peripheral sector of the complex. Requires [2Fe-2S] cluster as cofactor. The cofactor is [4Fe-4S] cluster.

It carries out the reaction a quinone + NADH + 5 H(+)(in) = a quinol + NAD(+) + 4 H(+)(out). Functionally, NDH-1 shuttles electrons from NADH, via FMN and iron-sulfur (Fe-S) centers, to quinones in the respiratory chain. The immediate electron acceptor for the enzyme in this species is believed to be ubiquinone. Couples the redox reaction to proton translocation (for every two electrons transferred, four hydrogen ions are translocated across the cytoplasmic membrane), and thus conserves the redox energy in a proton gradient. This is NADH-quinone oxidoreductase subunit G (nuoG) from Shigella flexneri.